The chain runs to 327 residues: Arabinose 5-phosphate isomerase KpsF (327 aa).

An SIS domain is found at 48 to 191; that stretch reads VLNLIMNCKG…AIAMIHQRKF (144 aa). An ATP-binding site is contributed by 63 to 68; sequence GMGKSG. Substrate is bound by residues 82 to 83, His-89, His-95, 121 to 130, and 155 to 157; these read GT, KLVPSLKNFG, and HMA. His-89 provides a ligand contact to Zn(2+). CBS domains lie at 217–273 and 282–327; these read MQHD…EGSL and MTRE…RIFD.

As to quaternary structure, homotetramer.

The enzyme catalyses D-arabinose 5-phosphate = D-ribulose 5-phosphate. Its activity is regulated as follows. Inhibited by 10 uM zinc, cadmium or mercury ions. Its function is as follows. Involved in the biosynthesis of K-antigen capsules. Catalyzes the reversible aldol-ketol isomerization between D-ribulose 5-phosphate (Ru5P) and D-arabinose 5-phosphate (A5P). This is Arabinose 5-phosphate isomerase KpsF from Escherichia coli O6:H1 (strain CFT073 / ATCC 700928 / UPEC).